A 401-amino-acid polypeptide reads, in one-letter code: F-box protein At2g43440 (401 aa).

Positions 7–53 (NTNSIYIVPELLEDIFLRLPLKSILKFKTVSRQWRSILESKLFVERR) constitute an F-box domain.

In Arabidopsis thaliana (Mouse-ear cress), this protein is F-box protein At2g43440.